We begin with the raw amino-acid sequence, 716 residues long: Fatty acid oxidation complex subunit alpha (716 aa).

Residues 1–189 (MIYQSPTIQV…KVGAVDAVVA (189 aa)) form an enoyl-CoA hydratase/isomerase region. Asp-296 lines the substrate pocket. Residues 311 to 716 (KDVKSAAVLG…AANNGSYYQA (406 aa)) form a 3-hydroxyacyl-CoA dehydrogenase region. Residues Met-324, Asp-343, 400 to 402 (VVE), Lys-407, and Ser-429 contribute to the NAD(+) site. Residue His-450 is the For 3-hydroxyacyl-CoA dehydrogenase activity of the active site. Residue Asn-453 coordinates NAD(+). The substrate site is built by Asn-500 and Tyr-660.

In the N-terminal section; belongs to the enoyl-CoA hydratase/isomerase family. It in the C-terminal section; belongs to the 3-hydroxyacyl-CoA dehydrogenase family. Heterotetramer of two alpha chains (FadB) and two beta chains (FadA).

It catalyses the reaction a (3S)-3-hydroxyacyl-CoA + NAD(+) = a 3-oxoacyl-CoA + NADH + H(+). The enzyme catalyses a (3S)-3-hydroxyacyl-CoA = a (2E)-enoyl-CoA + H2O. It carries out the reaction a 4-saturated-(3S)-3-hydroxyacyl-CoA = a (3E)-enoyl-CoA + H2O. The catalysed reaction is (3S)-3-hydroxybutanoyl-CoA = (3R)-3-hydroxybutanoyl-CoA. It catalyses the reaction a (3Z)-enoyl-CoA = a 4-saturated (2E)-enoyl-CoA. The enzyme catalyses a (3E)-enoyl-CoA = a 4-saturated (2E)-enoyl-CoA. It functions in the pathway lipid metabolism; fatty acid beta-oxidation. In terms of biological role, involved in the aerobic and anaerobic degradation of long-chain fatty acids via beta-oxidation cycle. Catalyzes the formation of 3-oxoacyl-CoA from enoyl-CoA via L-3-hydroxyacyl-CoA. It can also use D-3-hydroxyacyl-CoA and cis-3-enoyl-CoA as substrate. This is Fatty acid oxidation complex subunit alpha from Shewanella sp. (strain ANA-3).